Reading from the N-terminus, the 269-residue chain is Formamidopyrimidine-DNA glycosylase (269 aa).

Catalysis depends on Pro-2, which acts as the Schiff-base intermediate with DNA. Glu-3 (proton donor) is an active-site residue. The active-site Proton donor; for beta-elimination activity is the Lys-57. DNA-binding residues include His-90, Arg-109, and Lys-150. An FPG-type zinc finger spans residues Phe-235–Tyr-269. The Proton donor; for delta-elimination activity role is filled by Arg-259.

It belongs to the FPG family. Monomer. Zn(2+) serves as cofactor.

It catalyses the reaction Hydrolysis of DNA containing ring-opened 7-methylguanine residues, releasing 2,6-diamino-4-hydroxy-5-(N-methyl)formamidopyrimidine.. The catalysed reaction is 2'-deoxyribonucleotide-(2'-deoxyribose 5'-phosphate)-2'-deoxyribonucleotide-DNA = a 3'-end 2'-deoxyribonucleotide-(2,3-dehydro-2,3-deoxyribose 5'-phosphate)-DNA + a 5'-end 5'-phospho-2'-deoxyribonucleoside-DNA + H(+). In terms of biological role, involved in base excision repair of DNA damaged by oxidation or by mutagenic agents. Acts as a DNA glycosylase that recognizes and removes damaged bases. Has a preference for oxidized purines, such as 7,8-dihydro-8-oxoguanine (8-oxoG). Has AP (apurinic/apyrimidinic) lyase activity and introduces nicks in the DNA strand. Cleaves the DNA backbone by beta-delta elimination to generate a single-strand break at the site of the removed base with both 3'- and 5'-phosphates. The polypeptide is Formamidopyrimidine-DNA glycosylase (Photorhabdus laumondii subsp. laumondii (strain DSM 15139 / CIP 105565 / TT01) (Photorhabdus luminescens subsp. laumondii)).